The following is a 419-amino-acid chain: Gamma-glutamyl phosphate reductase (419 aa).

The protein belongs to the gamma-glutamyl phosphate reductase family.

The protein localises to the cytoplasm. The enzyme catalyses L-glutamate 5-semialdehyde + phosphate + NADP(+) = L-glutamyl 5-phosphate + NADPH + H(+). Its pathway is amino-acid biosynthesis; L-proline biosynthesis; L-glutamate 5-semialdehyde from L-glutamate: step 2/2. Functionally, catalyzes the NADPH-dependent reduction of L-glutamate 5-phosphate into L-glutamate 5-semialdehyde and phosphate. The product spontaneously undergoes cyclization to form 1-pyrroline-5-carboxylate. The protein is Gamma-glutamyl phosphate reductase of Marinomonas sp. (strain MWYL1).